The primary structure comprises 400 residues: tRNA(Met) cytidine acetate ligase (400 aa).

Residues 7 to 20 (IVEY…HLYH), glycine 101, asparagine 159, and arginine 184 contribute to the ATP site.

This sequence belongs to the TmcAL family.

Its subcellular location is the cytoplasm. The catalysed reaction is cytidine(34) in elongator tRNA(Met) + acetate + ATP = N(4)-acetylcytidine(34) in elongator tRNA(Met) + AMP + diphosphate. In terms of biological role, catalyzes the formation of N(4)-acetylcytidine (ac(4)C) at the wobble position of elongator tRNA(Met), using acetate and ATP as substrates. First activates an acetate ion to form acetyladenylate (Ac-AMP) and then transfers the acetyl group to tRNA to form ac(4)C34. The chain is tRNA(Met) cytidine acetate ligase from Caldicellulosiruptor saccharolyticus (strain ATCC 43494 / DSM 8903 / Tp8T 6331).